Consider the following 188-residue polypeptide: Protein GrpE (188 aa).

Residues 1 to 22 (MEENKQNQNLNTEETTEQQTEA) show a composition bias toward low complexity. Residues 1 to 26 (MEENKQNQNLNTEETTEQQTEAETVE) are disordered.

Belongs to the GrpE family. Homodimer.

The protein resides in the cytoplasm. Its function is as follows. Participates actively in the response to hyperosmotic and heat shock by preventing the aggregation of stress-denatured proteins, in association with DnaK and GrpE. It is the nucleotide exchange factor for DnaK and may function as a thermosensor. Unfolded proteins bind initially to DnaJ; upon interaction with the DnaJ-bound protein, DnaK hydrolyzes its bound ATP, resulting in the formation of a stable complex. GrpE releases ADP from DnaK; ATP binding to DnaK triggers the release of the substrate protein, thus completing the reaction cycle. Several rounds of ATP-dependent interactions between DnaJ, DnaK and GrpE are required for fully efficient folding. This is Protein GrpE from Exiguobacterium sibiricum (strain DSM 17290 / CCUG 55495 / CIP 109462 / JCM 13490 / 255-15).